We begin with the raw amino-acid sequence, 96 residues long: Co-chaperonin GroES (96 aa).

It belongs to the GroES chaperonin family. Heptamer of 7 subunits arranged in a ring. Interacts with the chaperonin GroEL.

It localises to the cytoplasm. Functionally, together with the chaperonin GroEL, plays an essential role in assisting protein folding. The GroEL-GroES system forms a nano-cage that allows encapsulation of the non-native substrate proteins and provides a physical environment optimized to promote and accelerate protein folding. GroES binds to the apical surface of the GroEL ring, thereby capping the opening of the GroEL channel. The protein is Co-chaperonin GroES of Nitrosomonas eutropha (strain DSM 101675 / C91 / Nm57).